The chain runs to 89 residues: Small ribosomal subunit protein uS15 (89 aa).

It belongs to the universal ribosomal protein uS15 family. Part of the 30S ribosomal subunit. Forms a bridge to the 50S subunit in the 70S ribosome, contacting the 23S rRNA.

One of the primary rRNA binding proteins, it binds directly to 16S rRNA where it helps nucleate assembly of the platform of the 30S subunit by binding and bridging several RNA helices of the 16S rRNA. In terms of biological role, forms an intersubunit bridge (bridge B4) with the 23S rRNA of the 50S subunit in the ribosome. This Thermobifida fusca (strain YX) protein is Small ribosomal subunit protein uS15.